Reading from the N-terminus, the 310-residue chain is Ribosomal RNA small subunit methyltransferase H (310 aa).

S-adenosyl-L-methionine-binding positions include 40–42 (GGH), Asp59, Phe89, Asp104, and Gln111.

The protein belongs to the methyltransferase superfamily. RsmH family.

Its subcellular location is the cytoplasm. The catalysed reaction is cytidine(1402) in 16S rRNA + S-adenosyl-L-methionine = N(4)-methylcytidine(1402) in 16S rRNA + S-adenosyl-L-homocysteine + H(+). Specifically methylates the N4 position of cytidine in position 1402 (C1402) of 16S rRNA. The polypeptide is Ribosomal RNA small subunit methyltransferase H (Amoebophilus asiaticus (strain 5a2)).